The following is a 155-amino-acid chain: Protein PtsT (155 aa).

The protein is Protein PtsT (ptsT) of Geobacillus stearothermophilus (Bacillus stearothermophilus).